The chain runs to 60 residues: DKCNKLVPLFYKTCPAGKNLCYKMFMVSDLTVPVKRGCIDVCPKNSALVKYVCCNTDRCN.

Intrachain disulfides connect Cys3–Cys21, Cys14–Cys38, Cys42–Cys53, and Cys54–Cys59.

This sequence belongs to the three-finger toxin family. Short-chain subfamily. Type IA cytotoxin sub-subfamily. In terms of assembly, monomer in solution; Homodimer and oligomer in the presence of negatively charged lipids forming a pore with a size ranging between 20 and 30 Angstroms. As to expression, expressed by the venom gland.

The protein resides in the secreted. The protein localises to the target cell membrane. Shows cytolytic activity on many different cells by forming pore in lipid membranes. In vivo, increases heart rate or kills the animal by cardiac arrest. In addition, it binds to heparin with high affinity, interacts with Kv channel-interacting protein 1 (KCNIP1) in a calcium-independent manner, and binds to integrin alpha-V/beta-3 (ITGAV/ITGB3) with moderate affinity. The chain is Cytotoxin KJC3 from Naja sputatrix (Malayan spitting cobra).